Here is a 92-residue protein sequence, read N- to C-terminus: DNA-directed RNA polymerase subunit omega (92 aa).

The protein belongs to the RNA polymerase subunit omega family. In terms of assembly, the RNAP catalytic core consists of 2 alpha, 1 beta, 1 beta' and 1 omega subunit. When a sigma factor is associated with the core the holoenzyme is formed, which can initiate transcription.

The enzyme catalyses RNA(n) + a ribonucleoside 5'-triphosphate = RNA(n+1) + diphosphate. Its function is as follows. Promotes RNA polymerase assembly. Latches the N- and C-terminal regions of the beta' subunit thereby facilitating its interaction with the beta and alpha subunits. This chain is DNA-directed RNA polymerase subunit omega, found in Shewanella sp. (strain ANA-3).